The sequence spans 292 residues: Sulfofructosephosphate aldolase (292 aa).

The active-site Schiff-base intermediate with substrate is Lys-193.

This sequence belongs to the aldolase LacD family. As to quaternary structure, homotetramer.

The catalysed reaction is 6-deoxy-6-sulfo-D-fructose 1-phosphate = (2S)-3-sulfolactaldehyde + dihydroxyacetone phosphate. In terms of biological role, cleaves 6-deoxy-6-sulfo-D-fructose 1-phosphate (SFP) to form dihydroxyacetone phosphate (DHAP) and 3-sulfolactaldehyde (SLA). This Escherichia coli O157:H7 protein is Sulfofructosephosphate aldolase (yihT).